A 215-amino-acid chain; its full sequence is Octanoyltransferase (215 aa).

The 176-residue stretch at 31 to 206 folds into the BPL/LPL catalytic domain; the sequence is TTAPDEIWLV…QLVKHLDYAE (176 aa). Substrate is bound by residues 70-77, 137-139, and 150-152; these read RGGQVTYH, SLG, and GLA. The Acyl-thioester intermediate role is filled by Cys-168.

The protein belongs to the LipB family.

The protein localises to the cytoplasm. It carries out the reaction octanoyl-[ACP] + L-lysyl-[protein] = N(6)-octanoyl-L-lysyl-[protein] + holo-[ACP] + H(+). Its pathway is protein modification; protein lipoylation via endogenous pathway; protein N(6)-(lipoyl)lysine from octanoyl-[acyl-carrier-protein]: step 1/2. In terms of biological role, catalyzes the transfer of endogenously produced octanoic acid from octanoyl-acyl-carrier-protein onto the lipoyl domains of lipoate-dependent enzymes. Lipoyl-ACP can also act as a substrate although octanoyl-ACP is likely to be the physiological substrate. This is Octanoyltransferase from Pseudomonas fluorescens (strain Pf0-1).